Consider the following 505-residue polypeptide: 2,3-bisphosphoglycerate-independent phosphoglycerate mutase (505 aa).

Asp-11 and Ser-61 together coordinate Mn(2+). Catalysis depends on Ser-61, which acts as the Phosphoserine intermediate. Substrate-binding positions include His-122, 152–153 (RD), Arg-183, Arg-189, 259–262 (RTDR), and Lys-332. Asp-399, His-403, Asp-440, His-441, and His-458 together coordinate Mn(2+).

It belongs to the BPG-independent phosphoglycerate mutase family. As to quaternary structure, monomer. Requires Mn(2+) as cofactor.

The enzyme catalyses (2R)-2-phosphoglycerate = (2R)-3-phosphoglycerate. It functions in the pathway carbohydrate degradation; glycolysis; pyruvate from D-glyceraldehyde 3-phosphate: step 3/5. Catalyzes the interconversion of 2-phosphoglycerate and 3-phosphoglycerate. This Flavobacterium johnsoniae (strain ATCC 17061 / DSM 2064 / JCM 8514 / BCRC 14874 / CCUG 350202 / NBRC 14942 / NCIMB 11054 / UW101) (Cytophaga johnsonae) protein is 2,3-bisphosphoglycerate-independent phosphoglycerate mutase.